The following is a 1153-amino-acid chain: Otoancorin (1153 aa).

A signal peptide spans 1–22 (MSQEPTTYSLFLFLFLSHGVSS). N156 is a glycosylation site (N-linked (GlcNAc...) asparagine). The N-linked (GlcNAc...) (complex) asparagine glycan is linked to N211. N-linked (GlcNAc...) asparagine glycosylation is found at N244, N289, N321, N394, N398, N460, N544, N812, N911, and N974. A disordered region spans residues 1109–1128 (HSWQDAPASAGPTRTSSSRS). The GPI-anchor amidated alanine moiety is linked to residue A1130. Residues 1131–1153 (GALQSWGLWLGCPLLVLMAKLLW) constitute a propeptide, removed in mature form.

The protein belongs to the stereocilin family.

The protein resides in the apical cell membrane. It is found in the secreted. The protein localises to the extracellular space. It localises to the extracellular matrix. Functionally, may act as an adhesion molecule. The protein is Otoancorin (OTOA) of Homo sapiens (Human).